The primary structure comprises 721 residues: MIIKNQLIFVNFYVILIIWWFVMGILDKIQKKSEKIEKEKKSETVIPSDTKLKPIEPHPTINKKATVGNDETILDTYSIKIDEIEMEVVIKREEGYIYYLVPEIDKINMSLSKLTKDHLNHIKSQISDLGLIEYDQIREYLTNFSMRYNLAIPYIDSLAKFFYLVIGRLGLLEVPLNDDRLEEVMVNGYNVPVFVFHRKHQMCETNIVLDRNEVDRIIESIANLVNRPIDSRVPMLDAFLPDGSRVNATTADITMNGATLTIRKFSKNPLTVIDLINFGTLDIDTAAFLWQAVEGYFGAKPANTLIAGGTGSGKTTLLNVLSLFSMYNERIITIEDTPELQIPHKHVIKMVTRPARPGMPEYEVTMDDLIKNALRMRPDRIFVGEVRGKEAHSLLVAMNTGHDGALAYDEPIYLSDGNIINIGEFVDKFFKKYKNSIKKEDNGFGWIDIGNENIYIKSFNKLSLIIEDKRILRVWRKKYSGKLIKITTKNRREITLTHDHPVYISKTGEVLEINAEMVKVGDYIYIPKNNTINLDEVIKVETVDYNGHIYDLTVEDNHTYIAGKNEGFAVSNCSGTLHANSADEAILRLTSPPMNVPKIMLTALNFIINQQRIRRAGKTIRRILGIVEIVKGGGEGHEFAKTTLYEYNGLKDSLERRGICMWEEEVCEIAGITKEELLRDRENRKKVLSYLYKNNIRKLENVSDYIMRYQVDPEKLLRSIR.

The helical transmembrane segment at Q6–L26 threads the bilayer. G308–T315 is an ATP binding site.

It belongs to the GSP E family. In terms of processing, this protein undergoes a protein self splicing that involves a post-translational excision of the intervening region (intein) followed by peptide ligation.

The protein resides in the membrane. This is an uncharacterized protein from Methanocaldococcus jannaschii (strain ATCC 43067 / DSM 2661 / JAL-1 / JCM 10045 / NBRC 100440) (Methanococcus jannaschii).